A 126-amino-acid chain; its full sequence is MIRNISKSIVNLNSQKIATNTSFKELVLESKKPVIVDIRPCYYTPTKFLNKELFEAIKEKNDTFELVTIDFDEEYELAKLLKIQSFPTIIGFSNGNFLKKHTGPFRSKSHILEFLNHIETEHKKKY.

The region spanning 14–120 (SQKIATNTSF…ILEFLNHIET (107 aa)) is the Thioredoxin domain.

Belongs to the thioredoxin family.

The protein localises to the mitochondrion. This is Thioredoxin domain-containing protein, mitochondrial from Dictyostelium discoideum (Social amoeba).